The sequence spans 202 residues: ATP-dependent Clp protease proteolytic subunit 1 (202 aa).

S102 acts as the Nucleophile in catalysis. Residue H127 is part of the active site.

It belongs to the peptidase S14 family. As to quaternary structure, fourteen ClpP subunits assemble into 2 heptameric rings which stack back to back to give a disk-like structure with a central cavity, resembling the structure of eukaryotic proteasomes.

It localises to the cytoplasm. The catalysed reaction is Hydrolysis of proteins to small peptides in the presence of ATP and magnesium. alpha-casein is the usual test substrate. In the absence of ATP, only oligopeptides shorter than five residues are hydrolyzed (such as succinyl-Leu-Tyr-|-NHMec, and Leu-Tyr-Leu-|-Tyr-Trp, in which cleavage of the -Tyr-|-Leu- and -Tyr-|-Trp bonds also occurs).. Cleaves peptides in various proteins in a process that requires ATP hydrolysis. Has a chymotrypsin-like activity. Plays a major role in the degradation of misfolded proteins. This is ATP-dependent Clp protease proteolytic subunit 1 from Agrobacterium fabrum (strain C58 / ATCC 33970) (Agrobacterium tumefaciens (strain C58)).